The primary structure comprises 110 residues: UPF0102 protein HH_1751 (110 aa).

This sequence belongs to the UPF0102 family.

The polypeptide is UPF0102 protein HH_1751 (Helicobacter hepaticus (strain ATCC 51449 / 3B1)).